Consider the following 1663-residue polypeptide: MKDAAEELSFARVLLQRVDELEKLFKDREQFLELVSRKLSLVPGAEEVTMVTWEELEQAITDGWRASQAGSETLMGFSKHGGFTSLTSPEGTLSGDSTKQPSIEQALDSASGLGPDRTASGSGGTAHPSDGVSSREQSKVPSGTGRQQQPRARDEAGVPRLHQSSTFQFKSDSDRHRSREKLTSTQPRRNARPGPVQQDLPLARDQPSSVPASQSQVHLRPDRRGLEPTGMNQPGLVPASTYPHGVVPLSMGQLGVPPPEMDDRELIPFVVDEQRMLPPSVPGRDQQGLELPSTDQHGLVSVSAYQHGMTFPGTDQRSMEPLGMDQRGCVISGMGQQGLVPPGIDQQGLTLPVVDQHGLVLPFTDQHGLVSPGLMPISADQQGFVQPSLEATGFIQPGTEQHDLIQSGRFQRALVQRGAYQPGLVQPGADQRGLVRPGMDQSGLAQPGADQRGLVWPGMDQSGLAQPGRDQHGLIQPGTGQHDLVQSGTGQGVLVQPGVDQPGMVQPGRFQRALVQPGAYQPGLVQPGADQIDVVQPGADQHGLVQSGADQSDLAQPGAVQHGLVQPGVDQRGLAQPRADHQRGLVPPGADQRGLVQPGADQHGLVQPGVDQHGLAQPGEVQRSLVQPGIVQRGLVQPGAVQRGLVQPGAVQRGLVQPGVDQRGLVQPGAVQRGLVQPGAVQHGLVQPGADQRGLVQPGVDQRGLVQPGVDQRGLVQPGMDQRGLIQPGADQPGLVQPGAGQLGMVQPGIGQQGMVQPQADPHGLVQPGAYPLGLVQPGAYLHDLSQSGTYPRGLVQPGMDQYGLRQPGAYQPGLIAPGTKLRGSSTFQADSTGFISVRPYQHGMVPPGREQYGQVSPLLASQGLASPGIDRRSLVPPETYQQGLMHPGTDQHSPIPLSTGLGSTHPDQQHVASPGPGEHDQVYPDAAQHGHAFSLFDSHDSMYPGYRGPGYLSADQHGQEGLDPNRTRASDRHGIPAQKAPGQDVTLFRSPDSVDRVLSEGSEVSSEVLSERRNSLRRMSSSFPTAVETFHLMGELSSLYVGLKESMKDLDEEQAGQTDLEKIQFLLAQMVKRTIPPELQEQLKTVKTLAKEVWQEKAKVERLQRILEGEGNQEAGKELKAGELRLQLGVLRVTVADIEKELAELRESQDRGKAAMENSVSEASLYLQDQLDKLRMIIESMLTSSSTLLSMSMAPHKAHTLAPGQIDPEATCPACSLDVSHQVSTLVRRYEQLQDMVNSLAVSRPSKKAKLQRQDEELLGRVQSAILQVQGDCEKLNITTSNLIEDHRQKQKDIAMLYQGLEKLEKEKANREHLEMEIDVKADKSALATKVSRVQFDATTEQLNHMMQELVAKMSGQEQDWQKMLDRLLTEMDNKLDRLELDPVKQLLEDRWKSLRQQLRERPPLYQADEAAAMRRQLLAHFHCLSCDRPLETPVTGHAIPVTPAGPGLPGHHSIRPYTVFELEQVRQHSRNLKLGSAFPRGDLAQMEQSVGRLRSMHSKMLMNIEKVQIHFGGSTKASSQIIRELLHAQCLGSPCYKRVTDMADYTYSTVPRRCGGSHTLTYPYHRSRPQHLPRGLYPTEEIQIAMKHDEVDILGLDGHIYKGRMDTRLPGILRKDSSGTSKRKSQQPRPHVHRPPSLSSNGQLPSRPQSAQISAGNTSER.

5 disordered regions span residues 80–239 (HGGF…LVPA), 423–481 (GLVQ…GTGQ), 575–615 (AQPR…QHGL), 880–925 (TYQQ…QVYP), and 948–984 (RGPG…APGQ). Composition is skewed to polar residues over residues 84–103 (TSLT…QPSI) and 131–150 (GVSS…QQQP). Basic and acidic residues predominate over residues 171–182 (SDSDRHRSREKL). Residues 206–217 (QPSSVPASQSQV) show a composition bias toward low complexity. A compositionally biased stretch (basic and acidic residues) spans 958-975 (HGQEGLDPNRTRASDRHG). Coiled-coil stretches lie at residues 1085–1160 (KTVK…MENS) and 1286–1325 (EDHR…KADK). Residues 1609-1619 (TRLPGILRKDS) are compositionally biased toward basic and acidic residues. Residues 1609–1663 (TRLPGILRKDSSGTSKRKSQQPRPHVHRPPSLSSNGQLPSRPQSAQISAGNTSER) form a disordered region. Positions 1623-1636 (SKRKSQQPRPHVHR) are enriched in basic residues. Polar residues predominate over residues 1639–1663 (SLSSNGQLPSRPQSAQISAGNTSER).

In terms of assembly, interacts with AKAP3, ODF2 and TSSK4. Interacts with AKAP4. In terms of tissue distribution, expressed in the sperm.

The protein localises to the nucleus membrane. Its subcellular location is the nucleus. The protein resides in the cytoplasm. It is found in the cell projection. It localises to the cilium. The protein localises to the flagellum. In terms of biological role, has an essential role in the formation of sperm flagella and flagellar structure maintainance. It acts as a suppressor of ubiquitination and degradation of proteins involved in flagellar development and motility. This is Glutamine-rich protein 2 (QRICH2) from Homo sapiens (Human).